The chain runs to 655 residues: p-hydroxybenzoic acid efflux pump subunit AaeB (655 aa).

The next 11 helical transmembrane spans lie at 13–33 (FAVK…HFQL), 38–58 (WAVL…GGEP), 69–89 (LRII…IAMI), 93–113 (LLMI…SSLV), 121–141 (WGLA…EPLL), 152–172 (EIVI…PRSI), 370–390 (LFWL…IAVV), 407–427 (FIYG…VIIP), 431–451 (QSML…GIEV), 455–475 (LLGS…DNPM), and 482–502 (FLDS…VILL).

Belongs to the aromatic acid exporter ArAE (TC 2.A.85) family.

Its subcellular location is the cell inner membrane. Functionally, forms an efflux pump with AaeA. Could function as a metabolic relief valve, allowing to eliminate certain compounds when they accumulate to high levels in the cell. This chain is p-hydroxybenzoic acid efflux pump subunit AaeB, found in Shigella boydii serotype 4 (strain Sb227).